The following is a 476-amino-acid chain: Aspartyl/glutamyl-tRNA(Asn/Gln) amidotransferase subunit B (476 aa).

Belongs to the GatB/GatE family. GatB subfamily. Heterotrimer of A, B and C subunits.

The catalysed reaction is L-glutamyl-tRNA(Gln) + L-glutamine + ATP + H2O = L-glutaminyl-tRNA(Gln) + L-glutamate + ADP + phosphate + H(+). It carries out the reaction L-aspartyl-tRNA(Asn) + L-glutamine + ATP + H2O = L-asparaginyl-tRNA(Asn) + L-glutamate + ADP + phosphate + 2 H(+). In terms of biological role, allows the formation of correctly charged Asn-tRNA(Asn) or Gln-tRNA(Gln) through the transamidation of misacylated Asp-tRNA(Asn) or Glu-tRNA(Gln) in organisms which lack either or both of asparaginyl-tRNA or glutaminyl-tRNA synthetases. The reaction takes place in the presence of glutamine and ATP through an activated phospho-Asp-tRNA(Asn) or phospho-Glu-tRNA(Gln). In Clostridium botulinum (strain ATCC 19397 / Type A), this protein is Aspartyl/glutamyl-tRNA(Asn/Gln) amidotransferase subunit B.